The chain runs to 580 residues: CDKN2A-interacting protein (580 aa).

Residue Ala2 is modified to N-acetylalanine. The XRN2-binding (XTBD) domain occupies 19 to 133 (VEALRCDGET…KVKKRGISSS (115 aa)). The tract at residues 129–356 (GISSSNEGVE…PKSSSSTNTS (228 aa)) is disordered. Position 131 is a phosphoserine (Ser131). Over residues 155–167 (EQDHAKTSAKTER) the composition is skewed to basic and acidic residues. The span at 168–179 (ASAQQENSSTCI) shows a compositional bias: polar residues. Residue Lys184 forms a Glycyl lysine isopeptide (Lys-Gly) (interchain with G-Cter in SUMO1) linkage. A compositionally biased stretch (low complexity) spans 185–228 (SESGNSARSSGISSQNSSTSDGDRSVSSQSSSSVSSQVTTAGSG). Positions 231 to 240 (SEAEAPDKHG) are enriched in basic and acidic residues. Residue Ser241 is modified to Phosphoserine. Positions 248–269 (LKSSVNSHMTQSTDSRQQSGSP) are enriched in polar residues. 2 stretches are compositionally biased toward low complexity: residues 274-313 (LEGS…PSSE) and 321-356 (SKTS…TNTS). Thr346 bears the Phosphothreonine mark. Position 389 is a phosphoserine (Ser389). The region spanning 462–537 (NHGELLNAAI…SREALKLFLK (76 aa)) is the DRBM domain.

Belongs to the CARF family. As to quaternary structure, interacts with CDKN2A/p14ARF, p53/TP53 and MDM2. Interacts with CHEK2 and MAPK3. Interacts with XRN2. Post-translationally, may be ubiquitinated. Ubiquitously expressed.

Its subcellular location is the nucleus. It is found in the nucleoplasm. Regulates DNA damage response in a dose-dependent manner through a number of signaling pathways involved in cell proliferation, apoptosis and senescence. The chain is CDKN2A-interacting protein (CDKN2AIP) from Homo sapiens (Human).